The sequence spans 342 residues: tRNA-specific 2-thiouridylase MnmA (342 aa).

ATP is bound by residues 6-13 (LLSGGVDS) and Leu-32. Cys-92 functions as the Nucleophile in the catalytic mechanism. Cys-92 and Cys-191 are joined by a disulfide. Gly-116 contributes to the ATP binding site. The interaction with tRNA stretch occupies residues 138–140 (KDQ). Cys-191 acts as the Cysteine persulfide intermediate in catalysis. The tract at residues 293-294 (RY) is interaction with tRNA.

Belongs to the MnmA/TRMU family.

Its subcellular location is the cytoplasm. It catalyses the reaction S-sulfanyl-L-cysteinyl-[protein] + uridine(34) in tRNA + AH2 + ATP = 2-thiouridine(34) in tRNA + L-cysteinyl-[protein] + A + AMP + diphosphate + H(+). Catalyzes the 2-thiolation of uridine at the wobble position (U34) of tRNA, leading to the formation of s(2)U34. The protein is tRNA-specific 2-thiouridylase MnmA of Helicobacter pylori (strain G27).